The following is an 804-amino-acid chain: Leucine--tRNA ligase (804 aa).

A 'HIGH' region motif is present at residues 40 to 51 (PYPSGAGLHVGH). A 'KMSKS' region motif is present at residues 576 to 580 (KMSKS). Lys-579 is a binding site for ATP.

Belongs to the class-I aminoacyl-tRNA synthetase family.

The protein resides in the cytoplasm. It carries out the reaction tRNA(Leu) + L-leucine + ATP = L-leucyl-tRNA(Leu) + AMP + diphosphate. The sequence is that of Leucine--tRNA ligase from Staphylococcus aureus (strain MRSA252).